The primary structure comprises 711 residues: Phosphate acetyltransferase (711 aa).

The interval 390–711 (AFRFQLTELA…IALTAIQATQ (322 aa)) is phosphate acetyltransferase.

The protein in the N-terminal section; belongs to the CobB/CobQ family. In the C-terminal section; belongs to the phosphate acetyltransferase and butyryltransferase family. Homohexamer.

It localises to the cytoplasm. The enzyme catalyses acetyl-CoA + phosphate = acetyl phosphate + CoA. It participates in metabolic intermediate biosynthesis; acetyl-CoA biosynthesis; acetyl-CoA from acetate: step 2/2. Its function is as follows. Involved in acetate metabolism. The chain is Phosphate acetyltransferase (pta) from Haemophilus influenzae (strain ATCC 51907 / DSM 11121 / KW20 / Rd).